The chain runs to 127 residues: Large ribosomal subunit protein bL20 (127 aa).

Belongs to the bacterial ribosomal protein bL20 family.

Functionally, binds directly to 23S ribosomal RNA and is necessary for the in vitro assembly process of the 50S ribosomal subunit. It is not involved in the protein synthesizing functions of that subunit. The polypeptide is Large ribosomal subunit protein bL20 (Bifidobacterium longum (strain NCC 2705)).